The sequence spans 414 residues: Dothistromin biosynthesis peroxidase dotB (414 aa).

Positions 1–18 (MHFFSAIVLTCLASTAVA) are cleaved as a signal peptide. C72 contributes to the heme binding site. Residues N187, N241, and N328 are each glycosylated (N-linked (GlcNAc...) asparagine).

The protein belongs to the chloroperoxidase family. It depends on heme b as a cofactor.

It functions in the pathway mycotoxin biosynthesis. Peroxidase; part of the fragmented gene cluster that mediates the biosynthesis of dothistromin (DOTH), a polyketide toxin very similar in structure to the aflatoxin precursor, versicolorin B. The first step of the pathway is the conversion of acetate to norsolorinic acid (NOR) and requires the fatty acid synthase subunits hexA and hexB, as well as the polyketide synthase pksA. PksA combines a hexanoyl starter unit and 7 malonyl-CoA extender units to synthesize the precursor NOR. The hexanoyl starter unit is provided to the acyl-carrier protein (ACP) domain by the fungal fatty acid synthase hexA/hexB. The second step is the conversion of NOR to averantin (AVN) and requires the norsolorinic acid ketoreductase nor1, which catalyzes the dehydration of norsolorinic acid to form (1'S)-averantin. The cytochrome P450 monooxygenase avnA then catalyzes the hydroxylation of AVN to 5'hydroxyaverantin (HAVN). The next step is performed by adhA that transforms HAVN to averufin (AVF). Averufin might then be converted to hydroxyversicolorone by cypX and avfA. Hydroxyversicolorone is further converted versiconal hemiacetal acetate (VHA) by moxY. VHA is then the substrate for the versiconal hemiacetal acetate esterase est1 to yield versiconal (VAL). Versicolorin B synthase vbsA then converts VAL to versicolorin B (VERB) by closing the bisfuran ring. Then, the activity of the versicolorin B desaturase verB leads to versicolorin A (VERA). DotB, a predicted chloroperoxidase, may perform epoxidation of the A-ring of VERA. Alternatively, a cytochrome P450, such as cypX or avnA could catalyze this step. It is also possible that another, uncharacterized, cytochrome P450 enzyme is responsible for this step. Opening of the epoxide could potentially be achieved by the epoxide hydrolase epoA. However, epoA seems not to be required for DOTH biosynthesis, but other epoxide hydrolases may have the ability to complement this hydrolysis. Alternatively, opening of the epoxide ring could be achieved non-enzymatically. The next step is the deoxygenation of ring A to yield the 5,8-dihydroxyanthraquinone which is most likely catalyzed by the NADPH dehydrogenase encoded by ver1. The last stages of DOTH biosynthesis are proposed to involve hydroxylation of the bisfuran. OrdB and norB might have oxidative roles here. An alternative possibility is that cytochrome P450 monoogenases such as avnA and cypX might perform these steps in addition to previously proposed steps. The sequence is that of Dothistromin biosynthesis peroxidase dotB from Dothistroma septosporum (Red band needle blight fungus).